Consider the following 571-residue polypeptide: Protein dead ringer homolog (571 aa).

Disordered regions lie at residues Gln45–Lys117 and Lys190–Gly229. Over residues Arg49–Arg77 the composition is skewed to basic and acidic residues. The segment covering Asp195 to Pro206 has biased composition (polar residues). Positions Thr207–Thr224 are enriched in low complexity. The region spanning Asp249–Glu341 is the ARID domain. The segment covering Ala459–Gln471 has biased composition (low complexity). Residues Ala459 to Ser528 are disordered. One can recognise an REKLES domain in the interval Ser473–His558. 2 stretches are compositionally biased toward basic and acidic residues: residues Pro487–Arg507 and Met518–Met527.

Its subcellular location is the nucleus. Its function is as follows. Transcription factor. The chain is Protein dead ringer homolog (Ci-DRIL1/2) from Ciona intestinalis (Transparent sea squirt).